A 155-amino-acid chain; its full sequence is Interleukin-2 (155 aa).

The first 20 residues, 1–20 (MYKIQLLSCIALTLALVANG), serve as a signal peptide directing secretion. A glycan (O-linked (GalNAc...) threonine) is linked at Thr23. Residues Cys79 and Cys127 are joined by a disulfide bond.

This sequence belongs to the IL-2 family.

Its subcellular location is the secreted. Cytokine produced by activated CD4-positive helper T-cells and to a lesser extend activated CD8-positive T-cells and natural killer (NK) cells that plays pivotal roles in the immune response and tolerance. Binds to a receptor complex composed of either the high-affinity trimeric IL-2R (IL2RA/CD25, IL2RB/CD122 and IL2RG/CD132) or the low-affinity dimeric IL-2R (IL2RB and IL2RG). Interaction with the receptor leads to oligomerization and conformation changes in the IL-2R subunits resulting in downstream signaling starting with phosphorylation of JAK1 and JAK3. In turn, JAK1 and JAK3 phosphorylate the receptor to form a docking site leading to the phosphorylation of several substrates including STAT5. This process leads to activation of several pathways including STAT, phosphoinositide-3-kinase/PI3K and mitogen-activated protein kinase/MAPK pathways. Functions as a T-cell growth factor and can increase NK-cell cytolytic activity as well. Promotes strong proliferation of activated B-cells and subsequently immunoglobulin production. Plays a pivotal role in regulating the adaptive immune system by controlling the survival and proliferation of regulatory T-cells, which are required for the maintenance of immune tolerance. Moreover, participates in the differentiation and homeostasis of effector T-cell subsets, including Th1, Th2, Th17 as well as memory CD8-positive T-cells. The chain is Interleukin-2 (IL2) from Ovis aries (Sheep).